Reading from the N-terminus, the 282-residue chain is Large ribosomal subunit protein uL2 (282 aa).

Positions R215–K282 are disordered. A compositionally biased stretch (basic residues) spans R263–K282.

The protein belongs to the universal ribosomal protein uL2 family. As to quaternary structure, part of the 50S ribosomal subunit. Forms a bridge to the 30S subunit in the 70S ribosome.

Its function is as follows. One of the primary rRNA binding proteins. Required for association of the 30S and 50S subunits to form the 70S ribosome, for tRNA binding and peptide bond formation. It has been suggested to have peptidyltransferase activity; this is somewhat controversial. Makes several contacts with the 16S rRNA in the 70S ribosome. This is Large ribosomal subunit protein uL2 from Mesomycoplasma hyopneumoniae (strain J / ATCC 25934 / NCTC 10110) (Mycoplasma hyopneumoniae).